A 455-amino-acid polypeptide reads, in one-letter code: Ribulose bisphosphate carboxylase large chain (455 aa).

Lysine 5 carries the post-translational modification N6,N6,N6-trimethyllysine. 2 residues coordinate substrate: asparagine 114 and threonine 164. The Proton acceptor role is filled by lysine 166. Lysine 168 is a binding site for substrate. Positions 192, 194, and 195 each coordinate Mg(2+). The residue at position 192 (lysine 192) is an N6-carboxylysine. The active-site Proton acceptor is histidine 285. Residues arginine 286, histidine 318, and serine 370 each contribute to the substrate site.

The protein belongs to the RuBisCO large chain family. Type I subfamily. In terms of assembly, heterohexadecamer of 8 large chains and 8 small chains; disulfide-linked. The disulfide link is formed within the large subunit homodimers. Mg(2+) serves as cofactor. In terms of processing, the disulfide bond which can form in the large chain dimeric partners within the hexadecamer appears to be associated with oxidative stress and protein turnover.

It is found in the plastid. Its subcellular location is the chloroplast. It carries out the reaction 2 (2R)-3-phosphoglycerate + 2 H(+) = D-ribulose 1,5-bisphosphate + CO2 + H2O. The enzyme catalyses D-ribulose 1,5-bisphosphate + O2 = 2-phosphoglycolate + (2R)-3-phosphoglycerate + 2 H(+). In terms of biological role, ruBisCO catalyzes two reactions: the carboxylation of D-ribulose 1,5-bisphosphate, the primary event in carbon dioxide fixation, as well as the oxidative fragmentation of the pentose substrate in the photorespiration process. Both reactions occur simultaneously and in competition at the same active site. The sequence is that of Ribulose bisphosphate carboxylase large chain from Senna didymobotrya (Popcorn cassia).